The following is a 129-amino-acid chain: Ropporin-1 (129 aa).

The RIIa domain occupies 11-34 (PELPELLKTQPPDLIQWAAEYFGA).

It belongs to the ropporin family. In terms of assembly, homodimer. Interacts with AKAP3. May interact with SPA17. Interacts with RHPN1. Interacts with FSCB; the interaction increases upon spermatozoa capacitation conditions. Interacts with CFAP61. In terms of processing, sumoylated, sumoylation decreases upon spermatozoa capacitation conditions.

Its subcellular location is the cell projection. It is found in the cilium. The protein resides in the flagellum. Important for male fertility. With ROPN1L, involved in fibrous sheath integrity and sperm motility, plays a role in PKA-dependent signaling processes required for spermatozoa capacitation. The protein is Ropporin-1 of Mesocricetus auratus (Golden hamster).